A 180-amino-acid polypeptide reads, in one-letter code: Transcription factor HES-7.1-A (180 aa).

Positions 13–70 (HRKLLKPLVEKRRRERINNSLEKLRIFLFQTLKSEKLKNPKVEKAEILECTVQFLQSR) constitute a bHLH domain. An Orange domain is found at 84-116 (YQSGFQHCLETTLHFMNSKPDMNGVTKELLSHQ). The WRPW motif signature appears at 176 to 179 (WRPW).

In terms of assembly, transcription repression requires formation of a complex with a corepressor protein of the Groucho/TLE family. As to expression, expressed in the presumptive midbrain-hindbrain boundary (MHB) as early as the early gastrula stage (stage 10.5). Expression in the MHB continues through to tailbud stage. Also transiently expressed in the eye anlage at late neurula stage.

It localises to the nucleus. Functionally, transcriptional repressor. Represses transcription from both N box- and E box-containing promoters. Demarcates the prospective midbrain-hindbrain boundary (MHB) region in the neuroectoderm in early gastrulae embryos by repressing transcription of a number of target genes. This Xenopus laevis (African clawed frog) protein is Transcription factor HES-7.1-A (hes7.1-a).